Reading from the N-terminus, the 210-residue chain is ATP-dependent Clp protease proteolytic subunit (210 aa).

The active-site Nucleophile is Ser-106. Residue His-131 is part of the active site.

It belongs to the peptidase S14 family. In terms of assembly, fourteen ClpP subunits assemble into 2 heptameric rings which stack back to back to give a disk-like structure with a central cavity, resembling the structure of eukaryotic proteasomes.

It localises to the cytoplasm. It catalyses the reaction Hydrolysis of proteins to small peptides in the presence of ATP and magnesium. alpha-casein is the usual test substrate. In the absence of ATP, only oligopeptides shorter than five residues are hydrolyzed (such as succinyl-Leu-Tyr-|-NHMec, and Leu-Tyr-Leu-|-Tyr-Trp, in which cleavage of the -Tyr-|-Leu- and -Tyr-|-Trp bonds also occurs).. Cleaves peptides in various proteins in a process that requires ATP hydrolysis. Has a chymotrypsin-like activity. Plays a major role in the degradation of misfolded proteins. The protein is ATP-dependent Clp protease proteolytic subunit of Afipia carboxidovorans (strain ATCC 49405 / DSM 1227 / KCTC 32145 / OM5) (Oligotropha carboxidovorans).